A 545-amino-acid chain; its full sequence is Chaperonin GroEL (545 aa).

Residues 30–33 (TLGP), Lys51, 87–91 (DGTTT), Gly415, and Asp495 contribute to the ATP site.

This sequence belongs to the chaperonin (HSP60) family. In terms of assembly, forms a cylinder of 14 subunits composed of two heptameric rings stacked back-to-back. Interacts with the co-chaperonin GroES.

It is found in the cytoplasm. The catalysed reaction is ATP + H2O + a folded polypeptide = ADP + phosphate + an unfolded polypeptide.. Functionally, together with its co-chaperonin GroES, plays an essential role in assisting protein folding. The GroEL-GroES system forms a nano-cage that allows encapsulation of the non-native substrate proteins and provides a physical environment optimized to promote and accelerate protein folding. In Shewanella sp. (strain MR-7), this protein is Chaperonin GroEL.